The primary structure comprises 152 residues: Transcription factor XE1.1 (152 aa).

Disordered stretches follow at residues 1 to 54 and 123 to 152; these read RDDF…ANNA and KVSA…MGHM. 2 stretches are compositionally biased toward basic and acidic residues: residues 7–22 and 38–54; these read DDMK…EMKS and PEQK…ANNA. A bHLH domain is found at 47 to 100; the sequence is ERRMANNARERLRVRDINEAFKELGRMCQLHLKSEKPQTKLLILHQAVAVILNL. The class A specific domain stretch occupies residues 102–125; the sequence is QQVRERNLNPKAACLKRREEEKVS. A compositionally biased stretch (polar residues) spans 143–152; the sequence is TDTTNPMGHM.

As to quaternary structure, efficient DNA binding requires dimerization with another bHLH protein. Forms homo- or heterooligomers with myogenin, E12 and ITF2 proteins.

The protein localises to the nucleus. Functionally, transcriptional regulator. Involved in the initiation of neuronal differentiation. Activates transcription by binding to the E box-containing promoter. The chain is Transcription factor XE1.1 from Xenopus laevis (African clawed frog).